The following is a 210-amino-acid chain: Uridine kinase (210 aa).

12–19 (GGSGGGKT) is an ATP binding site.

This sequence belongs to the uridine kinase family.

The protein localises to the cytoplasm. It catalyses the reaction uridine + ATP = UMP + ADP + H(+). The enzyme catalyses cytidine + ATP = CMP + ADP + H(+). Its pathway is pyrimidine metabolism; CTP biosynthesis via salvage pathway; CTP from cytidine: step 1/3. The protein operates within pyrimidine metabolism; UMP biosynthesis via salvage pathway; UMP from uridine: step 1/1. The protein is Uridine kinase of Streptococcus uberis (strain ATCC BAA-854 / 0140J).